Consider the following 395-residue polypeptide: Endophilin-B2 (395 aa).

Met1 carries the post-translational modification N-acetylmethionine. The interval 1-27 (MDFNMKKLASDAGIFFTRAVQFTEEKF) is membrane-binding amphipathic helix. Ser10 is subject to Phosphoserine. The region spanning 24 to 287 (EEKFGQAEKT…LGRFPGTFVG (264 aa)) is the BAR domain. Coiled-coil stretches lie at residues 116–132 (IKVA…ERDF) and 206–240 (ASAL…LLLE). An SH3 domain is found at 335-395 (SGTRKARVLY…VPVTYLELLS (61 aa)). A Phosphoserine modification is found at Ser395.

This sequence belongs to the endophilin family. In terms of assembly, homodimer, and heterodimer with SH3GLB1. As to expression, detected in skeletal muscle, adipocyte, brain, lung, colon and mammary gland.

Its subcellular location is the cytoplasm. This chain is Endophilin-B2 (SH3GLB2), found in Homo sapiens (Human).